The following is a 579-amino-acid chain: Deleted in azoospermia protein 4 (579 aa).

Polar residues predominate over residues 1-10; that stretch reads MSAANPETPN. A disordered region spans residues 1–27; sequence MSAANPETPNSTISREASTQSSSAAAS. The segment covering 11 to 27 has biased composition (low complexity); that stretch reads STISREASTQSSSAAAS. In terms of domain architecture, RRM 1 spans 40–115; that stretch reads NTVFVGGIDA…KKLKLGPAIR (76 aa). Residues 163–175 are compositionally biased toward polar residues; that stretch reads QHVQSAANPETPN. A disordered region spans residues 163 to 192; sequence QHVQSAANPETPNSTISREASTQSSSAAAS. Residues 176 to 192 are compositionally biased toward low complexity; that stretch reads STISREASTQSSSAAAS. The RRM 2 domain occupies 205–280; it reads NTVFVGGIDA…KKLKLGPAIR (76 aa). DAZ domains are found at residues 332-355, 356-379, 380-403, 404-427, 428-451, 452-475, 476-499, 500-523, and 524-547; these read AYSA…YNYQ, EYPT…YNYQ, PFPA…YNYQ, and AFPA…YNYQ.

This sequence belongs to the RRM DAZ family. Forms a heterodimer with BOLL and DAZL. Interacts with PUM2, DAZAP1, DAZAP2, DZIP1 and DZIP3. Testis-specific. Expression restricted to premeiotic germ cells, particularly in spermatogonia (at protein level).

The protein resides in the cytoplasm. It is found in the nucleus. RNA-binding protein that plays an essential role in spermatogenesis. May act by binding to the 3'-UTR of mRNAs and regulating their translation. The polypeptide is Deleted in azoospermia protein 4 (DAZ4) (Homo sapiens (Human)).